The sequence spans 434 residues: ATP-sensitive inward rectifier potassium channel 14 (434 aa).

Topologically, residues 1 to 81 are cytoplasmic; sequence MGLARALRRL…LSDLFTTCVD (81 aa). Cys79 is subject to S-nitrosocysteine. The helical transmembrane segment at 82–108 threads the bilayer; the sequence is VRWRWMCLLFSCSFLASWLLFGLTFWL. Residues 109–131 are Extracellular-facing; the sequence is IASLHGDLAAPPPPAPCFSQVAS. Positions 132-148 form an intramembrane region, helical; Pore-forming; it reads FLAAFLFALETQTSIGY. The Selectivity filter motif lies at 145–150; it reads SIGYGV. The Extracellular segment spans residues 149–157; it reads GVRSVTEEC. A helical membrane pass occupies residues 158–185; it reads PAAVAAVVLQCIAGCVLDAFVVGAVMAK. Over 186–434 the chain is Cytoplasmic; that stretch reads MAKPKKRNET…TPTLALTLPP (249 aa). Residues 398–434 form a disordered region; it reads QEEDEEEDTKEGTSAETPERAASPQALTPTLALTLPP. Basic and acidic residues predominate over residues 407–416; sequence KEGTSAETPE. A compositionally biased stretch (low complexity) spans 418–434; it reads AASPQALTPTLALTLPP.

The protein belongs to the inward rectifier-type potassium channel (TC 1.A.2.1) family. KCNJ14 subfamily.

The protein resides in the membrane. The enzyme catalyses K(+)(in) = K(+)(out). Channel activity is regulated by variations of cytosolic pH; channels are activated by alkaline and inhibited by acidic pH values. Inhibited by Ba(2+) and Cs(+) in a voltage-dependent manner; sensitivity to those inhibitors is lower than in other Kir channels. Its function is as follows. Inward rectifier potassium channels are characterized by a greater tendency to allow potassium to flow into the cell rather than out of it. Their voltage dependence is regulated by the concentration of extracellular potassium; as external potassium is raised, the voltage range of the channel opening shifts to more positive voltages. The chain is ATP-sensitive inward rectifier potassium channel 14 (Kcnj14) from Mus musculus (Mouse).